We begin with the raw amino-acid sequence, 408 residues long: CCA-adding enzyme (408 aa).

The ATP site is built by glycine 8 and arginine 11. CTP contacts are provided by glycine 8 and arginine 11. Mg(2+) contacts are provided by glutamate 21 and aspartate 23. Positions 91, 137, and 140 each coordinate ATP. CTP is bound by residues arginine 91, arginine 137, and arginine 140. The HD domain occupies 226 to 329 (TGYYTMTTLS…MTLFHVFDCW (104 aa)).

Belongs to the tRNA nucleotidyltransferase/poly(A) polymerase family. Bacterial CCA-adding enzyme type 2 subfamily. Mg(2+) serves as cofactor.

The enzyme catalyses a tRNA precursor + 2 CTP + ATP = a tRNA with a 3' CCA end + 3 diphosphate. It carries out the reaction a tRNA with a 3' CCA end + 2 CTP + ATP = a tRNA with a 3' CCACCA end + 3 diphosphate. In terms of biological role, catalyzes the addition and repair of the essential 3'-terminal CCA sequence in tRNAs without using a nucleic acid template. Adds these three nucleotides in the order of C, C, and A to the tRNA nucleotide-73, using CTP and ATP as substrates and producing inorganic pyrophosphate. tRNA 3'-terminal CCA addition is required both for tRNA processing and repair. Also involved in tRNA surveillance by mediating tandem CCA addition to generate a CCACCA at the 3' terminus of unstable tRNAs. While stable tRNAs receive only 3'-terminal CCA, unstable tRNAs are marked with CCACCA and rapidly degraded. The sequence is that of CCA-adding enzyme from Blochmanniella pennsylvanica (strain BPEN).